Consider the following 438-residue polypeptide: Probable phosphoglucosamine mutase (438 aa).

Ser-91 acts as the Phosphoserine intermediate in catalysis. The Mg(2+) site is built by Ser-91, Asp-228, Asp-230, and Asp-232. Ser-91 carries the post-translational modification Phosphoserine.

It belongs to the phosphohexose mutase family. Requires Mg(2+) as cofactor. In terms of processing, activated by phosphorylation.

The catalysed reaction is alpha-D-glucosamine 1-phosphate = D-glucosamine 6-phosphate. In terms of biological role, catalyzes the conversion of glucosamine-6-phosphate to glucosamine-1-phosphate. The chain is Probable phosphoglucosamine mutase from Methanocella arvoryzae (strain DSM 22066 / NBRC 105507 / MRE50).